Consider the following 120-residue polypeptide: Large ribosomal subunit protein eL34z (120 aa).

A disordered region spans residues 31-51 (VYQTTKKRASGPKCPVTGKRI).

The protein belongs to the eukaryotic ribosomal protein eL34 family.

In Arabidopsis thaliana (Mouse-ear cress), this protein is Large ribosomal subunit protein eL34z (RPL34A).